The sequence spans 949 residues: MESTLSAFSTVKATAMARSSGGPSLPLLTISKALNRHFTGARHLHPLLLARCSPSVRRLGGFHGSRFTSSNSALRSLGAAVLPVIRHRLECLSSSSPSFRSISSGGGSGFGGYNGGSGGGGGGGSESGDSKSKLGANASDGVSVPSSDIIILDVGGMTCGGCSASVKKILESQPQVASASVNLTTETAIVWPVPEAKSVPDWQKSLGETLANHLTNCGFQSTPRDLVTENFFKVFETKTKDKQARLKESGRELAVSWALCAVCLVGHLTHFLGVNAPWIHAIHSTGFHVSLCLITLLGPGRKLVLDGIKSLLKGSPNMNTLVGLGALSSFSVSSLAAMIPKLGWKTFFEEPVMLIAFVLLGRNLEQRAKIKATSDMTGLLSVLPSKARLLLDGDLQNSTVEVPCNSLSVGDLVVILPGDRVPADGVVKSGRSTIDESSFTGEPLPVTKESGSQVAAGSINLNGTLTVEVHRSGGETAVGDIIRLVEEAQSREAPVQQLVDKVAGRFTYGVMALSAATFTFWNLFGAHVLPSALHNGSPMSLALQLSCSVLVVACPCALGLATPTAMLVGTSLGARRGLLLRGGDILEKFSLVDTVVFDKTGTLTKGHPVVTEVIIPENPRHNLNDTWSEVEVLMLAAAVESNTTHPVGKAIVKAARARNCQTMKAEDGTFTEEPGSGAVAIVNNKRVTVGTLEWVKRHGATGNSLLALEEHEINNQSVVYIGVDNTLAAVIRFEDKVREDAAQVVENLTRQGIDVYMLSGDKRNAANYVASVVGINHERVIAGVKPAEKKNFINELQKNKKIVAMVGDGINDAAALASSNVGVAMGGGAGAASEVSPVVLMGNRLTQLLDAMELSRQTMKTVKQNLWWAFGYNIVGIPIAAGVLLPLTGTMLTPSMAGALMGVSSLGVMTNSLLLRYRFFSNRNDKNVKPEPKEGTKQPHENTRWKQSS.

The transit peptide at 1-103 (MESTLSAFST…SSSPSFRSIS (103 aa)) directs the protein to the chloroplast. Residues 113–126 (YNGGSGGGGGGGSE) are compositionally biased toward gly residues. A disordered region spans residues 113–142 (YNGGSGGGGGGGSESGDSKSKLGANASDGV). The HMA domain maps to 148–222 (DIIILDVGGM…HLTNCGFQST (75 aa)). 2 residues coordinate Cu(+): cysteine 159 and cysteine 162. Transmembrane regions (helical) follow at residues 253–274 (LAVS…FLGV), 287–306 (FHVS…LVLD), 314–334 (GSPN…SVSS), 349–369 (EEPV…QRAK), 502–524 (VAGR…WNLF), and 543–560 (LQLS…ALGL). The 4-aspartylphosphate intermediate role is filled by aspartate 598. 807 to 814 (GDGINDAA) lines the ATP pocket. Aspartate 808 and aspartate 812 together coordinate Mg(2+). Transmembrane regions (helical) follow at residues 863–882 (KQNL…IAAG) and 895–913 (SMAG…TNSL). The interval 925 to 949 (DKNVKPEPKEGTKQPHENTRWKQSS) is disordered.

This sequence belongs to the cation transport ATPase (P-type) (TC 3.A.3) family. Type IB subfamily. As to expression, expressed in the shoots and roots.

It localises to the plastid. It is found in the chloroplast membrane. It carries out the reaction Cu(+)(in) + ATP + H2O = Cu(+)(out) + ADP + phosphate + H(+). Mediates copper transfer across the plastid envelope. Required for the delivery of copper into the plastid stroma, which is essential for the function of copper proteins. Seems to be selective for monovalent copper Cu(+) transport. Also plays a role in glucose signaling-mediated cell proliferation of root meristem in non-green tissues. The polypeptide is Copper-transporting ATPase PAA1, chloroplastic (PAA1) (Arabidopsis thaliana (Mouse-ear cress)).